A 372-amino-acid polypeptide reads, in one-letter code: Chaperone protein DnaJ (372 aa).

The J domain maps to 5 to 70 (DYYELLEISR…EKKSIYDRYG (66 aa)). The segment at 134-211 (GCNKEINYKY…CKGTGYEEVK (78 aa)) adopts a CR-type zinc-finger fold. Residues cysteine 147, cysteine 150, cysteine 163, cysteine 166, cysteine 185, cysteine 188, cysteine 199, and cysteine 202 each contribute to the Zn(2+) site. CXXCXGXG motif repeat units follow at residues 147-154 (CKPCEGTG), 163-170 (CPTCKGQG), 185-192 (CPRCGGTG), and 199-206 (CKSCKGTG).

It belongs to the DnaJ family. In terms of assembly, homodimer. The cofactor is Zn(2+).

The protein localises to the cytoplasm. Functionally, participates actively in the response to hyperosmotic and heat shock by preventing the aggregation of stress-denatured proteins and by disaggregating proteins, also in an autonomous, DnaK-independent fashion. Unfolded proteins bind initially to DnaJ; upon interaction with the DnaJ-bound protein, DnaK hydrolyzes its bound ATP, resulting in the formation of a stable complex. GrpE releases ADP from DnaK; ATP binding to DnaK triggers the release of the substrate protein, thus completing the reaction cycle. Several rounds of ATP-dependent interactions between DnaJ, DnaK and GrpE are required for fully efficient folding. Also involved, together with DnaK and GrpE, in the DNA replication of plasmids through activation of initiation proteins. The sequence is that of Chaperone protein DnaJ from Aliarcobacter butzleri (strain RM4018) (Arcobacter butzleri).